A 255-amino-acid chain; its full sequence is Cyclic di-GMP phosphodiesterase PdeH (255 aa).

Residues 13-255 (EASIESLQER…ETLNTAVLAL (243 aa)) enclose the EAL domain.

The catalysed reaction is 3',3'-c-di-GMP + H2O = 5'-phosphoguanylyl(3'-&gt;5')guanosine + H(+). Its function is as follows. Involved in the control of the switch from cell motility to adhesion via regulation of cellular levels of cyclic-di-GMP (c-di-GMP). Part of a signaling cascade that regulates curli biosynthesis. The cascade is composed of two c-di-GMP control modules, in which c-di-GMP controlled by the DgcE/PdeH pair (module I) regulates the activity of the DgcM/PdeR pair (module II), which in turn regulates activity of the transcription factor MlrA and expression of the master biofilm regulator csgD. Effect on flagella is controlled via the c-di-GMP-binding flagellar brake protein YcgR. In Escherichia coli (strain K12), this protein is Cyclic di-GMP phosphodiesterase PdeH.